The following is a 301-amino-acid chain: D-alanine--D-alanine ligase (301 aa).

One can recognise an ATP-grasp domain in the interval 99-293; sequence KRILAFGNVR…FEELLDTIIE (195 aa). 126–181 serves as a coordination point for ATP; sequence IENLGYPVFIKPNNGGSSVATTLVESKEAVKDAVLEALKYDTEVMIEEYIKGDEIT. 3 residues coordinate Mg(2+): aspartate 248, glutamate 260, and asparagine 262.

Belongs to the D-alanine--D-alanine ligase family. Mg(2+) serves as cofactor. The cofactor is Mn(2+).

It localises to the cytoplasm. It catalyses the reaction 2 D-alanine + ATP = D-alanyl-D-alanine + ADP + phosphate + H(+). The protein operates within cell wall biogenesis; peptidoglycan biosynthesis. Cell wall formation. In Clostridium perfringens (strain SM101 / Type A), this protein is D-alanine--D-alanine ligase.